Reading from the N-terminus, the 360-residue chain is Peptide chain release factor 1 (360 aa).

An N5-methylglutamine modification is found at Q235. The tract at residues 285–304 (KRQQEEASTRRNLLGSGDRS) is disordered.

Belongs to the prokaryotic/mitochondrial release factor family. Post-translationally, methylated by PrmC. Methylation increases the termination efficiency of RF1.

Its subcellular location is the cytoplasm. In terms of biological role, peptide chain release factor 1 directs the termination of translation in response to the peptide chain termination codons UAG and UAA. This Edwardsiella ictaluri (strain 93-146) protein is Peptide chain release factor 1.